The sequence spans 273 residues: MTKLIIHLVSDSSVQTAKSAAHSSLAQFTSLKPKLYHWPMIRNSELLKEVLSNIESKHGIVLYTIADQELRKTLTKFCYELKIPCISVIGKIIKEMSVFSGIEIEKEQNYNYKFDKTYFDTLNAIDYAIRHDDGQLLNELQFADIVLIGPSRTSKTPTSVFLAYNGLKTANIPYVYNCPFPDFIEKDIDQLVVGLVINPNRLIEIRETRLNLLQINENRNYTDFNIVQKECLEVKKICELRNWPVIDVSTKSIEETAALIMRIYYNKKNKYNK.

Residue 149–156 (GPSRTSKT) participates in ADP binding.

Belongs to the pyruvate, phosphate/water dikinase regulatory protein family. PDRP subfamily.

The catalysed reaction is N(tele)-phospho-L-histidyl/L-threonyl-[pyruvate, phosphate dikinase] + ADP = N(tele)-phospho-L-histidyl/O-phospho-L-threonyl-[pyruvate, phosphate dikinase] + AMP + H(+). It catalyses the reaction N(tele)-phospho-L-histidyl/O-phospho-L-threonyl-[pyruvate, phosphate dikinase] + phosphate + H(+) = N(tele)-phospho-L-histidyl/L-threonyl-[pyruvate, phosphate dikinase] + diphosphate. Bifunctional serine/threonine kinase and phosphorylase involved in the regulation of the pyruvate, phosphate dikinase (PPDK) by catalyzing its phosphorylation/dephosphorylation. The chain is Putative pyruvate, phosphate dikinase regulatory protein from Rickettsia bellii (strain OSU 85-389).